Consider the following 513-residue polypeptide: ETS translocation variant 3 (513 aa).

Residues 35 to 116 (IQLWHFILEL…KGKRFTYKFN (82 aa)) constitute a DNA-binding region (ETS). The disordered stretch occupies residues 138-202 (QSAPPVPTAS…DLEDGSASDW (65 aa)). Phosphoserine is present on residues Ser139, Ser159, and Ser315. The tract at residues 333–513 (QMHPEEPSQF…ATTATAAADA (181 aa)) is disordered. 3 stretches are compositionally biased toward basic and acidic residues: residues 357–366 (ERVESREEAV), 380–392 (IKVE…DPDS), and 399–419 (GKEE…EEGK). Lys381 is covalently cross-linked (Glycyl lysine isopeptide (Lys-Gly) (interchain with G-Cter in SUMO2)). Residue Lys388 is modified to N6-acetyllysine; alternate. Lys388 participates in a covalent cross-link: Glycyl lysine isopeptide (Lys-Gly) (interchain with G-Cter in SUMO2); alternate. A compositionally biased stretch (polar residues) spans 430 to 439 (WPSVSISTPS). Residues 441-450 (EPLEGTEDSE) show a composition bias toward acidic residues. Composition is skewed to basic and acidic residues over residues 451–466 (DRSV…KEDA) and 477–489 (RWND…ELNK). Over residues 504–513 (ATTATAAADA) the composition is skewed to low complexity.

It belongs to the ETS family.

Its subcellular location is the nucleus. Functionally, transcriptional repressor that contribute to growth arrest during terminal macrophage differentiation by repressing target genes involved in Ras-dependent proliferation. Represses MMP1 promoter activity. This is ETS translocation variant 3 (Etv3) from Mus musculus (Mouse).